A 597-amino-acid polypeptide reads, in one-letter code: Putative diflavin flavoprotein A 3 (597 aa).

Residues 59–254 form a zinc metallo-hydrolase region; the sequence is QRGTTANSYL…YPAQTYAPSH (196 aa). A Flavodoxin-like domain is found at 283-421; it reads VALIYASAYG…MCEEAGTDFA (139 aa). The segment at 449-597 is flavodoxin-reductase-like; the sequence is LGRLVGSLCV…VHHRKSGDHY (149 aa).

This sequence in the N-terminal section; belongs to the zinc metallo-hydrolase group 3 family. The protein in the C-terminal section; belongs to the flavodoxin reductase family. It depends on Fe cation as a cofactor.

Its function is as follows. Mediates electron transfer from NADH to oxygen, reducing it to water. This modular protein has 3 redox cofactors, in other organisms the same activity requires 2 or 3 proteins. The chain is Putative diflavin flavoprotein A 3 (dfa3) from Synechocystis sp. (strain ATCC 27184 / PCC 6803 / Kazusa).